A 429-amino-acid chain; its full sequence is Adenylosuccinate synthetase (429 aa).

GTP is bound by residues 12-18 (GDEGKGK) and 40-42 (GHT). Aspartate 13 acts as the Proton acceptor in catalysis. Mg(2+) contacts are provided by aspartate 13 and glycine 40. IMP contacts are provided by residues 13–16 (DEGK), 38–41 (NAGH), threonine 129, arginine 143, glutamine 224, threonine 239, and arginine 303. Histidine 41 functions as the Proton donor in the catalytic mechanism. A substrate-binding site is contributed by 299–305 (VTTGRAR). GTP is bound by residues arginine 305, 331–333 (KLD), and 413–415 (GVG).

This sequence belongs to the adenylosuccinate synthetase family. Homodimer. Requires Mg(2+) as cofactor.

It is found in the cytoplasm. It catalyses the reaction IMP + L-aspartate + GTP = N(6)-(1,2-dicarboxyethyl)-AMP + GDP + phosphate + 2 H(+). It functions in the pathway purine metabolism; AMP biosynthesis via de novo pathway; AMP from IMP: step 1/2. Plays an important role in the de novo pathway of purine nucleotide biosynthesis. Catalyzes the first committed step in the biosynthesis of AMP from IMP. The protein is Adenylosuccinate synthetase of Rhodococcus opacus (strain B4).